The following is a 495-amino-acid chain: Phage-like element PBSX protein XkdE (495 aa).

Belongs to the phage portal family. PBSX subfamily.

The polypeptide is Phage-like element PBSX protein XkdE (xkdE) (Bacillus subtilis (strain 168)).